Here is a 554-residue protein sequence, read N- to C-terminus: Putative mediator of RNA polymerase II transcription subunit 29 (554 aa).

4 disordered regions span residues 118–301, 330–381, 398–428, and 483–524; these read DNKA…NTEA, QQQQ…PLPQ, LENQ…LQLQ, and NTNL…DDNT. Positions 122–210 are enriched in low complexity; sequence NTNNNNNNNN…NNSINNNSNN (89 aa). Residues 167–194 adopt a coiled-coil conformation; the sequence is NNNNNNNYNNNNNNNNNNNNNNNNNNNN. Over residues 211-225 the composition is skewed to polar residues; that stretch reads KVGSNDNPSTAPITE. The span at 226-264 shows a compositional bias: low complexity; the sequence is NNTENNAGNTNNTNNNNNNNNNNNNNNNNNNNNNNNNTN. Over residues 265 to 300 the composition is skewed to polar residues; sequence QVAESSNISSNTTPPETTNIVNDPNSVSGGNLTNTE. 3 stretches are compositionally biased toward low complexity: residues 330 to 374, 419 to 428, and 483 to 517; these read QQQQ…QQPQ, QQQQEQLQLQ, and NTNL…PEIN. Residues 419 to 486 adopt a coiled-coil conformation; sequence QQQQEQLQLQ…SLENQINTNL (68 aa).

This sequence belongs to the Mediator complex subunit 29 family. Component of the Mediator complex.

It localises to the nucleus. In terms of biological role, component of the Mediator complex, a coactivator involved in the regulated transcription of nearly all RNA polymerase II-dependent genes. Mediator functions as a bridge to convey information from gene-specific regulatory proteins to the basal RNA polymerase II transcription machinery. Mediator is recruited to promoters by direct interactions with regulatory proteins and serves as a scaffold for the assembly of a functional preinitiation complex with RNA polymerase II and the general transcription factors. The polypeptide is Putative mediator of RNA polymerase II transcription subunit 29 (med29) (Dictyostelium discoideum (Social amoeba)).